Here is a 387-residue protein sequence, read N- to C-terminus: Succinate--CoA ligase [ADP-forming] subunit beta (387 aa).

In terms of domain architecture, ATP-grasp spans 9–236; the sequence is KELFAKHNVP…RDATDPLELK (228 aa). Residues lysine 45, 52 to 54, serine 94, and glutamate 99 contribute to the ATP site; that span reads GRG. Positions 191 and 205 each coordinate Mg(2+). Residues asparagine 256 and 318-320 each bind substrate; that span reads GIT.

The protein belongs to the succinate/malate CoA ligase beta subunit family. Heterotetramer of two alpha and two beta subunits. Requires Mg(2+) as cofactor.

It catalyses the reaction succinate + ATP + CoA = succinyl-CoA + ADP + phosphate. The catalysed reaction is GTP + succinate + CoA = succinyl-CoA + GDP + phosphate. It participates in carbohydrate metabolism; tricarboxylic acid cycle; succinate from succinyl-CoA (ligase route): step 1/1. In terms of biological role, succinyl-CoA synthetase functions in the citric acid cycle (TCA), coupling the hydrolysis of succinyl-CoA to the synthesis of either ATP or GTP and thus represents the only step of substrate-level phosphorylation in the TCA. The beta subunit provides nucleotide specificity of the enzyme and binds the substrate succinate, while the binding sites for coenzyme A and phosphate are found in the alpha subunit. The polypeptide is Succinate--CoA ligase [ADP-forming] subunit beta (Mycolicibacterium smegmatis (strain ATCC 700084 / mc(2)155) (Mycobacterium smegmatis)).